A 510-amino-acid chain; its full sequence is MIWHVQNENFILDSTRIFMKAFHLLLFHGSFIFPECILIFGLILLLMIDSTSDQKDIPWLYFISSTSLVMSITALLFRWREEPMISFSGNFQTNNFNEIFQFLILLCSTLCIPLSVEYIECTEMAITEFLLFVLTATLGGMFLCGANDSITIFVAPECFSLCSYLLSGYTKRDVRSNEATTKYLLMGGASSSILVHGFSWLYGSSGGEIELQEIVNGLINTQMYNSPGISIALISITVGIGFKLSPAPSHQWTPDVYEGSPTPVVAFLSVTSKVAASASATRIFDIPFYFSSNEWHLLLEILAILSMILGNLIAITQTSMKRMLAYSSIGQIGYVIIGIIVGDSNDGYASMITYMLFYISMNLGTFARIVSFGLRTGTDNIRDYAGLYTKDPFLALSSALCLLSLGGLPPLAGFFGKLHLFWCGWQAGLYFLVSIGLLTSVVSIYYYLKIIKLLMTGRNQEITPHVRNYRRSPLRSNNSIELSMIVCVIASTIPGISMNPIIAIAQDTLF.

The next 13 helical transmembrane spans lie at 24–44 (LLLF…GLIL), 57–77 (IPWL…ALLF), 99–119 (IFQF…VEYI), 124–144 (MAIT…MFLC), 150–170 (ITIF…SGYT), 183–203 (YLLM…WLYG), 227–247 (PGIS…LSPA), 295–315 (WHLL…LIAI), 323–343 (MLAY…IVGD), 347–367 (GYAS…GTFA), 395–415 (ALSS…AGFF), 418–438 (LHLF…IGLL), and 484–504 (MIVC…IIAI).

Belongs to the complex I subunit 2 family. NDH is composed of at least 16 different subunits, 5 of which are encoded in the nucleus.

It is found in the plastid. Its subcellular location is the chloroplast thylakoid membrane. It catalyses the reaction a plastoquinone + NADH + (n+1) H(+)(in) = a plastoquinol + NAD(+) + n H(+)(out). The catalysed reaction is a plastoquinone + NADPH + (n+1) H(+)(in) = a plastoquinol + NADP(+) + n H(+)(out). Its function is as follows. NDH shuttles electrons from NAD(P)H:plastoquinone, via FMN and iron-sulfur (Fe-S) centers, to quinones in the photosynthetic chain and possibly in a chloroplast respiratory chain. The immediate electron acceptor for the enzyme in this species is believed to be plastoquinone. Couples the redox reaction to proton translocation, and thus conserves the redox energy in a proton gradient. The polypeptide is NAD(P)H-quinone oxidoreductase subunit 2 B, chloroplastic (Chloranthus spicatus (Chulantree)).